A 536-amino-acid chain; its full sequence is Velvet complex subunit B (536 aa).

Polar residues predominate over residues 1-26; the sequence is MIQRTTDPAAGSSTSGPPTNSLSWGS. 4 disordered regions span residues 1–27, 106–143, 157–409, and 508–536; these read MIQRTTDPAAGSSTSGPPTNSLSWGSR, PNAAQDRGPPMPAKPRRPTNPPPPSNTHGSPPAPAIPF, SAPA…RTLV, and KLPLRNRHGSGSKRRRRGAGGGSDDEESD. The region spanning 25-512 is the Velvet domain; it reads GSRHNGKLYT…NQQNMKLPLR (488 aa). Residues 114–143 show a composition bias toward pro residues; that stretch reads PPMPAKPRRPTNPPPPSNTHGSPPAPAIPF. Composition is skewed to low complexity over residues 158 to 170 and 190 to 265; these read APASDRSPSSASA and PYGP…YPPY. Positions 280–305 are enriched in polar residues; that stretch reads TSNFDHSQPVTSSVDQETNSPVVTTT. The segment covering 306–315 has biased composition (basic and acidic residues); sequence ARDDDQREGE. Residues 328–342 are compositionally biased toward low complexity; that stretch reads PSNSGAPSTSPTAST. Over residues 356 to 399 the composition is skewed to basic and acidic residues; that stretch reads EEREGPDGGPDLREPIEPGSTKAREEEDARTGTEKGDPKDKSDA. Over residues 400-409 the composition is skewed to polar residues; the sequence is QRATYTRTLV. Residues 511–525 are compositionally biased toward basic residues; the sequence is LRNRHGSGSKRRRRG.

It belongs to the velvet family. VelB subfamily. In terms of assembly, component of the heterotrimeric velvet complex composed of laeA, veA and velB; VeA acting as a bridging protein between laeA and velB. Forms a heterodimeric complex with vosA; the formation of the velB-vosA complex is light-dependent.

It is found in the nucleus. It localises to the cytoplasm. Functionally, component of the velvet transcription factor complex that controls sexual/asexual developmental ratio in response to light, promoting sexual development in the darkness while stimulating asexual sporulation under illumination. The velvet complex acts as a global regulator for secondary metabolite gene expression. Component of the velB-VosA heterodimeric complex that plays a dual role in activating genes associated with spore maturation and repressing certain development-associated genes. The velB-VosA complex binds DNA through the DNA-binding domain of vosA that recognizes an 11-nucleotide consensus sequence 5'-CTGGCCGCGGC-3' consisting of two motifs in the promoters of key developmental regulatory genes. The sequence is that of Velvet complex subunit B from Schizophyllum commune (strain H4-8 / FGSC 9210) (Split gill fungus).